Reading from the N-terminus, the 199-residue chain is MPEQSNDYRVAVFGAGGVGKSSLVLRFVKGTFRESYIPTVEDTYRQVISCDKSICTLQITDTTGSHQFPAMQRLSISKGHAFILVYSITSRQSLEELKPIYEQICEIKGDVESIPIMLVGNKCDESPNREVQSSEAEALARTWKCAFMETSAKLNHNVKELFQELLNLEKRRTVSLQIDGKKSKQQKRKEKLKGKCVVM.

GTP is bound by residues 14–21, 33–39, 61–65, and 121–124; these read GAGGVGKS, RESYIPT, DTTGS, and NKCD. Ser35 is subject to Phosphoserine. The Effector region signature appears at 36–44; sequence YIPTVEDTY. Ser126 is modified (phosphoserine). 152-153 is a GTP binding site; it reads AK. A Cysteine methyl ester modification is found at Cys196. Cys196 is lipidated: S-geranylgeranyl cysteine. Positions 197–199 are cleaved as a propeptide — removed in mature form; the sequence is VVM.

This sequence belongs to the small GTPase superfamily. Di-Ras family. Post-translationally, ubiquitinated by the ECS(ASB11) complex via 'Lys-11'-linked ubiquitin chains, leading to its degradation by the proteasome.

It localises to the cell membrane. The enzyme catalyses GTP + H2O = GDP + phosphate + H(+). Its function is as follows. Displays low GTPase activity and exists predominantly in the GTP-bound form. The polypeptide is GTP-binding protein Di-Ras2 (Diras2) (Mus musculus (Mouse)).